Consider the following 699-residue polypeptide: Kinesin-II 85 kDa subunit (699 aa).

The region spanning asparagine 10–isoleucine 342 is the Kinesin motor domain. An ATP-binding site is contributed by glycine 97 to threonine 104. Residues asparagine 341–cysteine 619 adopt a coiled-coil conformation. 3 disordered regions span residues lysine 369–glutamate 415, glutamate 432–leucine 456, and glycine 660–glutamine 699. Over residues glutamate 376–glycine 395 the composition is skewed to acidic residues. Positions lysine 400–lysine 411 are enriched in basic residues. Residues valine 620 to glutamine 699 form a globular region. Over residues glutamine 667–arginine 679 the composition is skewed to polar residues.

This sequence belongs to the TRAFAC class myosin-kinesin ATPase superfamily. Kinesin family. Kinesin II subfamily. As to quaternary structure, heterotrimer of a 115 kDa subunit (KAP115) and two kinesin-like subunits of 95 kDa (KRP95) and 85 kDa (KRP85). The N-terminus is blocked.

It is found in the cytoplasm. The protein resides in the cytoskeleton. This Strongylocentrotus purpuratus (Purple sea urchin) protein is Kinesin-II 85 kDa subunit (KRP85).